The chain runs to 511 residues: cAMP-regulated M3L protein (511 aa).

This sequence to D.discoideum protein M3R.

In Dictyostelium discoideum (Social amoeba), this protein is cAMP-regulated M3L protein (prtA).